A 353-amino-acid polypeptide reads, in one-letter code: Photosystem II protein D1 (353 aa).

At Thr-2 the chain carries N-acetylthreonine. Phosphothreonine is present on Thr-2. The next 3 membrane-spanning stretches (helical) occupy residues Tyr-29–Ser-46, His-118–Leu-133, and Trp-142–Ala-156. Residue His-118 coordinates chlorophyll a. Tyr-126 contributes to the pheophytin a binding site. [CaMn4O5] cluster contacts are provided by Asp-170 and Glu-189. A helical membrane pass occupies residues Phe-197–Leu-218. Chlorophyll a is bound at residue His-198. A quinone-binding positions include His-215 and Ser-264–Phe-265. Residue His-215 participates in Fe cation binding. His-272 serves as a coordination point for Fe cation. Residues Phe-274–Leu-288 traverse the membrane as a helical segment. [CaMn4O5] cluster is bound by residues His-332, Glu-333, Asp-342, and Ala-344. The propeptide occupies Ala-345 to Gly-353.

This sequence belongs to the reaction center PufL/M/PsbA/D family. In terms of assembly, PSII is composed of 1 copy each of membrane proteins PsbA, PsbB, PsbC, PsbD, PsbE, PsbF, PsbH, PsbI, PsbJ, PsbK, PsbL, PsbM, PsbT, PsbX, PsbY, PsbZ, Psb30/Ycf12, at least 3 peripheral proteins of the oxygen-evolving complex and a large number of cofactors. It forms dimeric complexes. The D1/D2 heterodimer binds P680, chlorophylls that are the primary electron donor of PSII, and subsequent electron acceptors. It shares a non-heme iron and each subunit binds pheophytin, quinone, additional chlorophylls, carotenoids and lipids. D1 provides most of the ligands for the Mn4-Ca-O5 cluster of the oxygen-evolving complex (OEC). There is also a Cl(-1) ion associated with D1 and D2, which is required for oxygen evolution. The PSII complex binds additional chlorophylls, carotenoids and specific lipids. serves as cofactor. In terms of processing, tyr-161 forms a radical intermediate that is referred to as redox-active TyrZ, YZ or Y-Z. Post-translationally, C-terminally processed by CTPA; processing is essential to allow assembly of the oxygen-evolving complex and thus photosynthetic growth.

It localises to the plastid. The protein resides in the chloroplast thylakoid membrane. The catalysed reaction is 2 a plastoquinone + 4 hnu + 2 H2O = 2 a plastoquinol + O2. Its function is as follows. Photosystem II (PSII) is a light-driven water:plastoquinone oxidoreductase that uses light energy to abstract electrons from H(2)O, generating O(2) and a proton gradient subsequently used for ATP formation. It consists of a core antenna complex that captures photons, and an electron transfer chain that converts photonic excitation into a charge separation. The D1/D2 (PsbA/PsbD) reaction center heterodimer binds P680, the primary electron donor of PSII as well as several subsequent electron acceptors. This Lotus japonicus (Lotus corniculatus var. japonicus) protein is Photosystem II protein D1.